A 362-amino-acid chain; its full sequence is Variable large protein 25 (362 aa).

The first 26 residues, 1–26 (MRKRISAIINKLNISIMMMIVVLMIG), serve as a signal peptide directing secretion. A lipid anchor (N-palmitoyl cysteine) is attached at Cys-27. Cys-27 carries S-diacylglycerol cysteine lipidation.

This sequence belongs to the variable large protein (Vlp) family. Alpha subfamily.

The protein localises to the cell outer membrane. The Vlp and Vsp proteins are antigenically distinct proteins, only one vlp or vsp gene is transcriptionally active at any one time. Switching between these genes is a mechanism of host immune response evasion. This chain is Variable large protein 25, found in Borrelia hermsii.